Consider the following 141-residue polypeptide: Nucleoside diphosphate kinase (141 aa).

Residues K11, F59, R87, T93, R104, and N114 each coordinate ATP.

The protein belongs to the NDK family. In terms of assembly, homotetramer. The cofactor is Mg(2+).

The protein localises to the cytoplasm. It catalyses the reaction a 2'-deoxyribonucleoside 5'-diphosphate + ATP = a 2'-deoxyribonucleoside 5'-triphosphate + ADP. The catalysed reaction is a ribonucleoside 5'-diphosphate + ATP = a ribonucleoside 5'-triphosphate + ADP. Major role in the synthesis of nucleoside triphosphates other than ATP. The ATP gamma phosphate is transferred to the NDP beta phosphate via a ping-pong mechanism, using a phosphorylated active-site intermediate. In Saccharophagus degradans (strain 2-40 / ATCC 43961 / DSM 17024), this protein is Nucleoside diphosphate kinase.